The primary structure comprises 514 residues: Flagellin B (514 aa).

This sequence belongs to the bacterial flagellin family. In terms of assembly, heteromer of FlaA and FlaB. FlaB is located proximal to the hook while the remainder of the filament is composed of the predominant FlaA.

Its subcellular location is the secreted. It is found in the bacterial flagellum. In terms of biological role, flagellin is the subunit protein which polymerizes to form the filaments of bacterial flagella. Important for motility and virulence. The sequence is that of Flagellin B (flaB) from Helicobacter pylori (strain J99 / ATCC 700824) (Campylobacter pylori J99).